We begin with the raw amino-acid sequence, 502 residues long: NAD(P)H-quinone oxidoreductase chain 4, chloroplastic (502 aa).

14 consecutive transmembrane segments (helical) span residues 4 to 24, 37 to 57, 87 to 107, 113 to 130, 134 to 154, 167 to 187, 208 to 228, 242 to 262, 272 to 292, 305 to 325, 330 to 350, 374 to 396, 416 to 436, and 464 to 484; these read FPWL…IFFF, ICIC…HFQL, VGPI…AWPV, LFHF…GLFS, LLLF…LLSM, FILY…GMGL, ALEI…LPII, HYST…YGLV, AHSI…IYAA, IAYS…SITD, GAIL…FLAG, IFTM…GFAA, ILIT…SLSM, and LFVS…PDFV.

This sequence belongs to the complex I subunit 4 family.

The protein localises to the plastid. It localises to the chloroplast thylakoid membrane. It catalyses the reaction a plastoquinone + NADH + (n+1) H(+)(in) = a plastoquinol + NAD(+) + n H(+)(out). The enzyme catalyses a plastoquinone + NADPH + (n+1) H(+)(in) = a plastoquinol + NADP(+) + n H(+)(out). The protein is NAD(P)H-quinone oxidoreductase chain 4, chloroplastic of Ranunculus macranthus (Large buttercup).